Reading from the N-terminus, the 549-residue chain is Glucose-6-phosphate isomerase (549 aa).

Glutamate 353 serves as the catalytic Proton donor. Catalysis depends on residues histidine 384 and lysine 513.

The protein belongs to the GPI family.

The protein resides in the cytoplasm. The catalysed reaction is alpha-D-glucose 6-phosphate = beta-D-fructose 6-phosphate. The protein operates within carbohydrate biosynthesis; gluconeogenesis. Its pathway is carbohydrate degradation; glycolysis; D-glyceraldehyde 3-phosphate and glycerone phosphate from D-glucose: step 2/4. Catalyzes the reversible isomerization of glucose-6-phosphate to fructose-6-phosphate. The sequence is that of Glucose-6-phosphate isomerase from Brucella anthropi (strain ATCC 49188 / DSM 6882 / CCUG 24695 / JCM 21032 / LMG 3331 / NBRC 15819 / NCTC 12168 / Alc 37) (Ochrobactrum anthropi).